The primary structure comprises 92 residues: Small ribosomal subunit protein bS18 (92 aa).

It belongs to the bacterial ribosomal protein bS18 family. As to quaternary structure, part of the 30S ribosomal subunit. Forms a tight heterodimer with protein bS6.

Functionally, binds as a heterodimer with protein bS6 to the central domain of the 16S rRNA, where it helps stabilize the platform of the 30S subunit. This is Small ribosomal subunit protein bS18 from Caulobacter sp. (strain K31).